A 450-amino-acid chain; its full sequence is 3-phosphoshikimate 1-carboxyvinyltransferase (450 aa).

Residues Lys23, Ser24, and Arg28 each contribute to the 3-phosphoshikimate site. Lys23 is a phosphoenolpyruvate binding site. Residues Gly96 and Arg124 each coordinate phosphoenolpyruvate. Positions 167, 168, 169, 196, 311, and 340 each coordinate 3-phosphoshikimate. Position 169 (Gln169) interacts with phosphoenolpyruvate. Glu311 (proton acceptor) is an active-site residue. Phosphoenolpyruvate-binding residues include Arg344, Arg385, and Lys410. Residues Gly426 to Gly450 form a disordered region.

It belongs to the EPSP synthase family. Monomer.

The protein localises to the cytoplasm. The catalysed reaction is 3-phosphoshikimate + phosphoenolpyruvate = 5-O-(1-carboxyvinyl)-3-phosphoshikimate + phosphate. It functions in the pathway metabolic intermediate biosynthesis; chorismate biosynthesis; chorismate from D-erythrose 4-phosphate and phosphoenolpyruvate: step 6/7. Its function is as follows. Catalyzes the transfer of the enolpyruvyl moiety of phosphoenolpyruvate (PEP) to the 5-hydroxyl of shikimate-3-phosphate (S3P) to produce enolpyruvyl shikimate-3-phosphate and inorganic phosphate. This is 3-phosphoshikimate 1-carboxyvinyltransferase from Mycobacterium tuberculosis (strain ATCC 25177 / H37Ra).